A 1594-amino-acid chain; its full sequence is Calpain-D (1594 aa).

RanBP2-type zinc fingers lie at residues 1–35 and 135–164; these read MGTI…VRKV and LNRR…VSYL. Disordered regions lie at residues 210 to 256, 371 to 400, 420 to 459, 524 to 543, and 554 to 606; these read EEQH…TAID, EPQQ…NPTQ, ASSS…SSSG, KKKQ…GSGE, and AGLG…RLSG. Positions 215 to 229 are enriched in basic residues; it reads HQLHSQHLHKRHLKG. Polar residues-rich tracts occupy residues 246 to 255 and 371 to 385; these read RRTQSLSTAI and EPQQ…QLQR. Position 250 is a phosphoserine (serine 250). Low complexity predominate over residues 438–459; it reads NSNSNSSGNSNIINNNSSSSSG. Positions 528–541 are enriched in polar residues; the sequence is QIASESQTNNNTGS. Residues 643–673 form a RanBP2-type 3 zinc finger; that stretch reads RSKMWICIKCSYAYNRLWLQTCEMCEAKAEQ. Positions 684 to 703 are disordered; it reads QQQQQQHHHHHLQQQQAEAP. 2 RanBP2-type zinc fingers span residues 704–733 and 744–774; these read RDEP…SKLK and RKGE…HRQP. Disordered stretches follow at residues 786–811 and 860–884; these read RPDG…HQSG and SLQQ…GSIV. Residues 860–871 show a composition bias toward polar residues; sequence SLQQQRNSSSSG. The segment at 927–956 adopts a RanBP2-type 6 zinc-finger fold; sequence STKKWQCPACTYDNCAASVVCDICSSPRGL. In terms of domain architecture, Calpain catalytic spans 1014–1321; the sequence is LFVDDSFPPA…FDCIDICKVR (308 aa). Residues cysteine 1079, histidine 1245, and asparagine 1265 contribute to the active site.

The protein belongs to the peptidase C2 family.

In terms of biological role, has a role in eye development. Calcium-regulated non-lysosomal thiol-protease. The sequence is that of Calpain-D (sol) from Drosophila melanogaster (Fruit fly).